A 500-amino-acid chain; its full sequence is Lysine--tRNA ligase (500 aa).

Residues Glu-410 and Glu-417 each coordinate Mg(2+).

It belongs to the class-II aminoacyl-tRNA synthetase family. As to quaternary structure, homodimer. Mg(2+) serves as cofactor.

The protein resides in the cytoplasm. It catalyses the reaction tRNA(Lys) + L-lysine + ATP = L-lysyl-tRNA(Lys) + AMP + diphosphate. In Pseudomonas putida (strain W619), this protein is Lysine--tRNA ligase.